Here is a 51-residue protein sequence, read N- to C-terminus: Mitochondrial import receptor subunit TOM5 homolog (51 aa).

Met-1 is modified (N-acetylmethionine). Lys-10 participates in a covalent cross-link: Glycyl lysine isopeptide (Lys-Gly) (interchain with G-Cter in SUMO2). Residues 27 to 45 (SIRNFLIYVALLRVTPYIL) traverse the membrane as a helical segment.

The protein belongs to the Tom5 family. Forms part of the preprotein translocase complex of the outer mitochondrial membrane (TOM complex) which consists of at least 7 different proteins (TOMM5, TOMM6, TOMM7, TOMM20, TOMM22, TOMM40 and TOMM70).

It is found in the mitochondrion outer membrane. This is Mitochondrial import receptor subunit TOM5 homolog from Mus musculus (Mouse).